A 694-amino-acid polypeptide reads, in one-letter code: Elongation factor G (694 aa).

One can recognise a tr-type G domain in the interval 10–285 (EKTRNIGIMA…GVVDYLPSPL (276 aa)). GTP contacts are provided by residues 19–26 (AHIDAGKT), 83–87 (DTPGH), and 137–140 (NKMD).

It belongs to the TRAFAC class translation factor GTPase superfamily. Classic translation factor GTPase family. EF-G/EF-2 subfamily.

It is found in the cytoplasm. Functionally, catalyzes the GTP-dependent ribosomal translocation step during translation elongation. During this step, the ribosome changes from the pre-translocational (PRE) to the post-translocational (POST) state as the newly formed A-site-bound peptidyl-tRNA and P-site-bound deacylated tRNA move to the P and E sites, respectively. Catalyzes the coordinated movement of the two tRNA molecules, the mRNA and conformational changes in the ribosome. The polypeptide is Elongation factor G (Lactobacillus delbrueckii subsp. bulgaricus (strain ATCC BAA-365 / Lb-18)).